The chain runs to 561 residues: Urocanate hydratase (561 aa).

Residues 52–53, glutamine 130, 176–178, glutamate 196, arginine 201, 242–243, 263–267, 273–274, and tyrosine 322 each bind NAD(+); these read GG, GMG, NA, QTSAH, and YL. Cysteine 410 is an active-site residue. An NAD(+)-binding site is contributed by glycine 492.

This sequence belongs to the urocanase family. It depends on NAD(+) as a cofactor.

Its subcellular location is the cytoplasm. The enzyme catalyses 4-imidazolone-5-propanoate = trans-urocanate + H2O. The protein operates within amino-acid degradation; L-histidine degradation into L-glutamate; N-formimidoyl-L-glutamate from L-histidine: step 2/3. In terms of biological role, catalyzes the conversion of urocanate to 4-imidazolone-5-propionate. The polypeptide is Urocanate hydratase (Salmonella typhi).